The chain runs to 844 residues: DNA mismatch repair protein MutS (844 aa).

Position 610–617 (610–617 (GPNMGGKS)) interacts with ATP.

It belongs to the DNA mismatch repair MutS family.

This protein is involved in the repair of mismatches in DNA. It is possible that it carries out the mismatch recognition step. This protein has a weak ATPase activity. The protein is DNA mismatch repair protein MutS of Francisella tularensis subsp. mediasiatica (strain FSC147).